The sequence spans 419 residues: UDP-N-acetylglucosamine 1-carboxyvinyltransferase (419 aa).

22–23 lines the phosphoenolpyruvate pocket; it reads KN. Residue Arg-93 coordinates UDP-N-acetyl-alpha-D-glucosamine. Cys-117 serves as the catalytic Proton donor. Residue Cys-117 is modified to 2-(S-cysteinyl)pyruvic acid O-phosphothioketal. Residues Asp-307 and Ile-329 each contribute to the UDP-N-acetyl-alpha-D-glucosamine site.

This sequence belongs to the EPSP synthase family. MurA subfamily.

It localises to the cytoplasm. The catalysed reaction is phosphoenolpyruvate + UDP-N-acetyl-alpha-D-glucosamine = UDP-N-acetyl-3-O-(1-carboxyvinyl)-alpha-D-glucosamine + phosphate. It participates in cell wall biogenesis; peptidoglycan biosynthesis. Cell wall formation. Adds enolpyruvyl to UDP-N-acetylglucosamine. The sequence is that of UDP-N-acetylglucosamine 1-carboxyvinyltransferase from Shewanella piezotolerans (strain WP3 / JCM 13877).